The following is a 504-amino-acid chain: Nuclear hormone receptor family member nhr-80 (504 aa).

Positions 27–103 form a DNA-binding region, nuclear receptor; that stretch reads STRCLICSAQ…NGMKPGGVQP (77 aa). 2 NR C4-type zinc fingers span residues 30 to 50 and 66 to 86; these read CLIC…CSAC and CITG…CRSC. Positions 177-192 are enriched in low complexity; it reads SSSTSFSASTTTNYST. The tract at residues 177–199 is disordered; sequence SSSTSFSASTTTNYSTPGPSPMA. The NR LBD domain maps to 214 to 466; it reads EEMKLGERRR…KLVLQLLNLD (253 aa). The interval 455-466 is AF-2; sequence LDKLVLQLLNLD.

Belongs to the nuclear hormone receptor family. In terms of assembly, interacts with nuclear hormone receptor nhr-49; the interaction is direct. As to expression, expressed in the intestine and in some head and tail neurons, as well as the ventral nerve cord.

It is found in the nucleus. Functionally, transcription factor. Binds to regulatory elements and regulates transcription of target genes, including acyltransferase dgat-2. As part of a lysosome-to-nucleus retrograde lipid signaling pathway, acts as a direct nuclear receptor of oleoylethanolamide (OEA) and, acting in concert with nuclear hormone receptor nhr-49, activates the transcription of genes promoting longevity and mitochondrial beta-oxidation. Required to modulate expression of delta-9 fatty acid desaturases, thereby regulating lipid metabolism; in some contexts, acting in concert with nhr-49. Involved in modulation of lipid metabolism in response to the citrate-induced mitochondrial unfolded protein response (mtUPR), acting downstream of transcription factor dve-1 and ubiquitin-like protein 5. Plays a role in modulating mitochondrial morphology and function. Involved in positively modulating life-span in a germline-dependent manner, acting in concert with nuclear hormone receptor daf-12. Plays a role in transgenerational lipid accumulation in response to a high-fat diet. This is Nuclear hormone receptor family member nhr-80 from Caenorhabditis elegans.